The chain runs to 356 residues: Protein RecA (356 aa).

75 to 82 contacts ATP; that stretch reads GPESSGKT.

It belongs to the RecA family.

It is found in the cytoplasm. Functionally, can catalyze the hydrolysis of ATP in the presence of single-stranded DNA, the ATP-dependent uptake of single-stranded DNA by duplex DNA, and the ATP-dependent hybridization of homologous single-stranded DNAs. It interacts with LexA causing its activation and leading to its autocatalytic cleavage. This chain is Protein RecA, found in Burkholderia mallei (strain ATCC 23344).